Consider the following 391-residue polypeptide: Ferrochelatase (391 aa).

2 residues coordinate Fe cation: histidine 196 and glutamate 281.

This sequence belongs to the ferrochelatase family.

The protein localises to the cytoplasm. The catalysed reaction is heme b + 2 H(+) = protoporphyrin IX + Fe(2+). It functions in the pathway porphyrin-containing compound metabolism; protoheme biosynthesis; protoheme from protoporphyrin-IX: step 1/1. In terms of biological role, catalyzes the ferrous insertion into protoporphyrin IX. The polypeptide is Ferrochelatase (Prochlorococcus marinus (strain SARG / CCMP1375 / SS120)).